The chain runs to 419 residues: Ubiquitin receptor RAD23c (419 aa).

One can recognise a Ubiquitin-like domain in the interval 1 to 79 (MKIFVKTLKG…IVIMMNKSKP (79 aa)). Low complexity predominate over residues 83–118 (AASSASAGTSQAKSIPPSTSQPSISPQTPASVSAPV). Positions 83–172 (AASSASAGTS…DSAPVGSQGD (90 aa)) are disordered. The span at 119 to 135 (APAPTRPPPPAPTPTPA) shows a compositional bias: pro residues. Over residues 136 to 146 (PVAATETVTTP) the composition is skewed to low complexity. Residues 185–228 (SNLESTIQQILDMGGGTWDRETVVLALRAAFNNPERAVEYLYTG) enclose the UBA 1 domain. Residues 235-282 (VPPVARPPASAGQPANPPAQTQQPAAAPASGPNANPLDLFPQGLPNVG) form a disordered region. Low complexity predominate over residues 245 to 270 (AGQPANPPAQTQQPAAAPASGPNANP). In terms of domain architecture, STI1 spans 288-331 (GTLDFLRNSQQFQALRAMVQANPQVLQPMLQELGKQNPNLMRLI). The UBA 2 domain occupies 372-413 (THEEREAIERLEAMGFERALVLEVFFACNKNEELAANYLLDH).

It belongs to the RAD23 family. Interacts with 'Lys-48'-linked polyubiquitin chains via its both UBA domains. Interacts with RPN10 via its ubiquitin-like domain. Widely expressed in the whole plant.

The protein resides in the nucleus. Its subcellular location is the cytoplasm. May be involved in nucleotide excision repair. Binds and presumably selects ubiquitin-conjugates for destruction. Prefers multiubiquitin chains rather than single ubiquitins, with a binding affinity for 'Lys-48'-linked ubiquitin chains. Acts as a ubiquitin receptor that associates with the 26S proteasomal docking subunit RPN10 for the indirect recognition of ubiquitinated substrates of ubiquitin/26S proteasome-mediated proteolysis (UPP). Involved in UV tolerance in hypocotyls, specifically in dark conditions. The sequence is that of Ubiquitin receptor RAD23c from Arabidopsis thaliana (Mouse-ear cress).